The following is a 231-amino-acid chain: 2-C-methyl-D-erythritol 4-phosphate cytidylyltransferase (231 aa).

Belongs to the IspD/TarI cytidylyltransferase family. IspD subfamily.

It carries out the reaction 2-C-methyl-D-erythritol 4-phosphate + CTP + H(+) = 4-CDP-2-C-methyl-D-erythritol + diphosphate. Its pathway is isoprenoid biosynthesis; isopentenyl diphosphate biosynthesis via DXP pathway; isopentenyl diphosphate from 1-deoxy-D-xylulose 5-phosphate: step 2/6. Its function is as follows. Catalyzes the formation of 4-diphosphocytidyl-2-C-methyl-D-erythritol from CTP and 2-C-methyl-D-erythritol 4-phosphate (MEP). This chain is 2-C-methyl-D-erythritol 4-phosphate cytidylyltransferase, found in Bacillus licheniformis (strain ATCC 14580 / DSM 13 / JCM 2505 / CCUG 7422 / NBRC 12200 / NCIMB 9375 / NCTC 10341 / NRRL NRS-1264 / Gibson 46).